A 241-amino-acid polypeptide reads, in one-letter code: 2-C-methyl-D-erythritol 4-phosphate cytidylyltransferase (241 aa).

This sequence belongs to the IspD/TarI cytidylyltransferase family. IspD subfamily.

It carries out the reaction 2-C-methyl-D-erythritol 4-phosphate + CTP + H(+) = 4-CDP-2-C-methyl-D-erythritol + diphosphate. Its pathway is isoprenoid biosynthesis; isopentenyl diphosphate biosynthesis via DXP pathway; isopentenyl diphosphate from 1-deoxy-D-xylulose 5-phosphate: step 2/6. Functionally, catalyzes the formation of 4-diphosphocytidyl-2-C-methyl-D-erythritol from CTP and 2-C-methyl-D-erythritol 4-phosphate (MEP). The chain is 2-C-methyl-D-erythritol 4-phosphate cytidylyltransferase from Shewanella denitrificans (strain OS217 / ATCC BAA-1090 / DSM 15013).